Here is a 276-residue protein sequence, read N- to C-terminus: Digeranylgeranylglyceryl phosphate synthase (276 aa).

The next 7 membrane-spanning stretches (helical) occupy residues 14–34 (NCIL…GHFP), 40–60 (LLIF…NDYF), 92–112 (FAVG…LGVI), 146–166 (GAVA…AFLV), 202–222 (VGVL…KASV), 224–244 (VGYY…YLIL), and 256–276 (QKLL…AAIV).

It belongs to the UbiA prenyltransferase family. DGGGP synthase subfamily. Mg(2+) serves as cofactor.

It is found in the cell membrane. It carries out the reaction sn-3-O-(geranylgeranyl)glycerol 1-phosphate + (2E,6E,10E)-geranylgeranyl diphosphate = 2,3-bis-O-(geranylgeranyl)-sn-glycerol 1-phosphate + diphosphate. It participates in membrane lipid metabolism; glycerophospholipid metabolism. Prenyltransferase that catalyzes the transfer of the geranylgeranyl moiety of geranylgeranyl diphosphate (GGPP) to the C2 hydroxyl of (S)-3-O-geranylgeranylglyceryl phosphate (GGGP). This reaction is the second ether-bond-formation step in the biosynthesis of archaeal membrane lipids. This is Digeranylgeranylglyceryl phosphate synthase from Thermococcus onnurineus (strain NA1).